Here is a 145-residue protein sequence, read N- to C-terminus: MNWAAAVCWALLLAATFLCDGSAAKGGRGGARGSARGGRGAARVRVRPAPRYAGSSVRAAAGAAAGAAAAAGVAAGLAAGSSWRRAAGPAELGLEDAEDGAPGSNGTGRGVYSYWAWTSGAGPTGHRHLCPLLGGALGALRLLRP.

The signal sequence occupies residues 1–24 (MNWAAAVCWALLLAATFLCDGSAA). An N-linked (GlcNAc...) asparagine glycan is attached at Asn-105. Ser-119 carries the GPI-anchor amidated serine lipid modification. The propeptide at 120–145 (GAGPTGHRHLCPLLGGALGALRLLRP) is removed in mature form.

It belongs to the SPRN family. N-glycosylated. In terms of tissue distribution, mainly expressed in brain.

It is found in the cell membrane. Prion-like protein that has PrP(C)-like neuroprotective activity. May act as a modulator for the biological actions of normal and abnormal PrP. The sequence is that of Shadow of prion protein (SPRN) from Ovis aries (Sheep).